The following is a 139-amino-acid chain: Small ribosomal subunit protein uS11A (139 aa).

The disordered stretch occupies residues 119–139 (DVTPIPTDSTRRKGGRRGRRL). A compositionally biased stretch (basic residues) spans 130-139 (RKGGRRGRRL).

It belongs to the universal ribosomal protein uS11 family. As to quaternary structure, component of the small ribosomal subunit (SSU). Mature yeast ribosomes consist of a small (40S) and a large (60S) subunit. The 40S small subunit contains 1 molecule of ribosomal RNA (18S rRNA) and at least 33 different proteins. The large 60S subunit contains 3 rRNA molecules (25S, 5.8S and 5S rRNA) and at least 46 different proteins. uS11 interacts with eS1 forming part of the mRNA exit tunnel. uS11 interacts with snoRNA U3. uS11 interacts with MPP10. Component of the ribosomal small subunit (SSU) processome composed of at least 40 protein subunits and snoRNA U3.

It is found in the cytoplasm. The protein localises to the nucleus. The protein resides in the nucleolus. In terms of biological role, component of the ribosome, a large ribonucleoprotein complex responsible for the synthesis of proteins in the cell. The small ribosomal subunit (SSU) binds messenger RNAs (mRNAs) and translates the encoded message by selecting cognate aminoacyl-transfer RNA (tRNA) molecules. The large subunit (LSU) contains the ribosomal catalytic site termed the peptidyl transferase center (PTC), which catalyzes the formation of peptide bonds, thereby polymerizing the amino acids delivered by tRNAs into a polypeptide chain. The nascent polypeptides leave the ribosome through a tunnel in the LSU and interact with protein factors that function in enzymatic processing, targeting, and the membrane insertion of nascent chains at the exit of the ribosomal tunnel. uS11 is involved in nucleolar processing of pre-18S ribosomal RNA and ribosome assembly. The protein is Small ribosomal subunit protein uS11A (rps1401) of Schizosaccharomyces pombe (strain 972 / ATCC 24843) (Fission yeast).